Reading from the N-terminus, the 227-residue chain is Cytochrome c oxidase subunit 2 (227 aa).

Residues 1 to 26 lie on the Mitochondrial intermembrane side of the membrane; sequence MATWSNLSLQDGASPLMEQLSFFHDH. Residues 27 to 48 form a helical membrane-spanning segment; that stretch reads TMIDLLLITMIVGYSLSYMLLT. Topologically, residues 49-62 are mitochondrial matrix; that stretch reads KYTNRNMLHGHLIE. A helical transmembrane segment spans residues 63–82; that stretch reads TIWTALPAITLIFIALPSLR. The Mitochondrial intermembrane segment spans residues 83-227; sequence LLYLLDDSSD…LFIKWLSNMM (145 aa). 6 residues coordinate Cu cation: histidine 161, cysteine 196, glutamate 198, cysteine 200, histidine 204, and methionine 207. Glutamate 198 is a binding site for Mg(2+).

This sequence belongs to the cytochrome c oxidase subunit 2 family. Component of the cytochrome c oxidase (complex IV, CIV), a multisubunit enzyme composed of a catalytic core of 3 subunits and several supernumerary subunits. The complex exists as a monomer or a dimer and forms supercomplexes (SCs) in the inner mitochondrial membrane with ubiquinol-cytochrome c oxidoreductase (cytochrome b-c1 complex, complex III, CIII). The cofactor is Cu cation.

It localises to the mitochondrion inner membrane. It catalyses the reaction 4 Fe(II)-[cytochrome c] + O2 + 8 H(+)(in) = 4 Fe(III)-[cytochrome c] + 2 H2O + 4 H(+)(out). Its function is as follows. Component of the cytochrome c oxidase, the last enzyme in the mitochondrial electron transport chain which drives oxidative phosphorylation. The respiratory chain contains 3 multisubunit complexes succinate dehydrogenase (complex II, CII), ubiquinol-cytochrome c oxidoreductase (cytochrome b-c1 complex, complex III, CIII) and cytochrome c oxidase (complex IV, CIV), that cooperate to transfer electrons derived from NADH and succinate to molecular oxygen, creating an electrochemical gradient over the inner membrane that drives transmembrane transport and the ATP synthase. Cytochrome c oxidase is the component of the respiratory chain that catalyzes the reduction of oxygen to water. Electrons originating from reduced cytochrome c in the intermembrane space (IMS) are transferred via the dinuclear copper A center (CU(A)) of subunit 2 and heme A of subunit 1 to the active site in subunit 1, a binuclear center (BNC) formed by heme A3 and copper B (CU(B)). The BNC reduces molecular oxygen to 2 water molecules using 4 electrons from cytochrome c in the IMS and 4 protons from the mitochondrial matrix. This is Cytochrome c oxidase subunit 2 (COII) from Locusta migratoria (Migratory locust).